The chain runs to 266 residues: Protein crossbronx-like (266 aa).

In terms of domain architecture, UBC core spans 15 to 178; sequence KQGYHILAEY…VQEQAIASRN (164 aa).

The protein belongs to the ubiquitin-conjugating enzyme family. FTS subfamily.

The polypeptide is Protein crossbronx-like (Drosophila yakuba (Fruit fly)).